We begin with the raw amino-acid sequence, 219 residues long: NADH-quinone oxidoreductase subunit C (219 aa).

Belongs to the complex I 30 kDa subunit family. NDH-1 is composed of 14 different subunits. Subunits NuoB, C, D, E, F, and G constitute the peripheral sector of the complex.

Its subcellular location is the cell inner membrane. The catalysed reaction is a quinone + NADH + 5 H(+)(in) = a quinol + NAD(+) + 4 H(+)(out). Its function is as follows. NDH-1 shuttles electrons from NADH, via FMN and iron-sulfur (Fe-S) centers, to quinones in the respiratory chain. The immediate electron acceptor for the enzyme in this species is believed to be ubiquinone. Couples the redox reaction to proton translocation (for every two electrons transferred, four hydrogen ions are translocated across the cytoplasmic membrane), and thus conserves the redox energy in a proton gradient. This chain is NADH-quinone oxidoreductase subunit C, found in Methylorubrum populi (strain ATCC BAA-705 / NCIMB 13946 / BJ001) (Methylobacterium populi).